A 291-amino-acid polypeptide reads, in one-letter code: 4-diphosphocytidyl-2-C-methyl-D-erythritol kinase (291 aa).

Lysine 10 is a catalytic residue. Residue 94–104 (PVSAGLAGGSS) coordinates ATP. Aspartate 136 is an active-site residue.

It belongs to the GHMP kinase family. IspE subfamily.

The enzyme catalyses 4-CDP-2-C-methyl-D-erythritol + ATP = 4-CDP-2-C-methyl-D-erythritol 2-phosphate + ADP + H(+). It functions in the pathway isoprenoid biosynthesis; isopentenyl diphosphate biosynthesis via DXP pathway; isopentenyl diphosphate from 1-deoxy-D-xylulose 5-phosphate: step 3/6. Functionally, catalyzes the phosphorylation of the position 2 hydroxy group of 4-diphosphocytidyl-2C-methyl-D-erythritol. This chain is 4-diphosphocytidyl-2-C-methyl-D-erythritol kinase, found in Listeria monocytogenes serotype 4a (strain HCC23).